The sequence spans 55 residues: uncharacterized protein (55 aa).

Residues 1-30 (MDKPTVETSAAPVETLVLTEPPAETQAEDS) are disordered.

This is an uncharacterized protein from Frog virus 3 (isolate Goorha) (FV-3).